The sequence spans 512 residues: Mesoderm induction early response protein 1 (512 aa).

Residues 1-16 (MAEPSVESSSPGGSAT) are compositionally biased toward low complexity. Disordered stretches follow at residues 1 to 63 (MAEP…REGD) and 75 to 173 (YGST…EDYI). Position 10 is a phosphoserine (serine 10). Over residues 17–36 (SDDHEFDPSADMLVHDFDDE) the composition is skewed to basic and acidic residues. Composition is skewed to acidic residues over residues 37-46 (RTLEEEEMME) and 83-105 (EEDE…DNDD). Residues 129 to 144 (QSSNDDPSQSVASQDA) are compositionally biased toward polar residues. Serine 141 is subject to Phosphoserine. Position 155 is a phosphotyrosine (tyrosine 155). Serine 160 and serine 166 each carry phosphoserine. A compositionally biased stretch (acidic residues) spans 160-173 (SEVEEESEEDEDYI). The 99-residue stretch at 180–278 (KEIMVGSMFQ…EALRRLRFNV (99 aa)) folds into the ELM2 domain. Positions 180 to 284 (KEIMVGSMFQ…RFNVKAAREE (105 aa)) are interaction with HDAC1. Residue lysine 239 forms a Glycyl lysine isopeptide (Lys-Gly) (interchain with G-Cter in SUMO2) linkage. An SANT domain is found at 283–335 (EELSVWTEEECRNFEQGLKAYGKDFHLIQANKVRTRSVGECVAFYYMWKKSER). Residues 366 to 512 (ESESAASSRA…KFEELENTDD (147 aa)) form a disordered region. 3 positions are modified to phosphoserine: serine 367, serine 369, and serine 377. Over residues 396-409 (TVSTANQNGVSSNG) the composition is skewed to polar residues. A compositionally biased stretch (basic and acidic residues) spans 414–423 (LNKEEVKVEG). Residue lysine 420 forms a Glycyl lysine isopeptide (Lys-Gly) (interchain with G-Cter in SUMO2) linkage. Residue threonine 448 is modified to Phosphothreonine. Residues 462-475 (ARNENDFDEKSERP) are compositionally biased toward basic and acidic residues. Positions 482-494 (NSNGKESPGSSEF) are enriched in polar residues. 3 positions are modified to phosphoserine: serine 483, serine 488, and serine 491.

In terms of assembly, interacts with HDAC1. Part of a complex containing at least CDYL, MIER1, MIER2, HDAC1 and HDAC2. Ubiquitously expressed, but at very low levels. However, consistent level of expression are observed in heart, testis, thyroid, ovary and adrenal gland. Transcripts are up-regulated in breast carcinoma cell lines and tumor.

The protein localises to the nucleus. Its subcellular location is the cytoplasm. Transcriptional repressor regulating the expression of a number of genes including SP1 target genes. Probably functions through recruitment of HDAC1 a histone deacetylase involved in chromatin silencing. The protein is Mesoderm induction early response protein 1 (MIER1) of Homo sapiens (Human).